Consider the following 396-residue polypeptide: 1-deoxy-D-xylulose 5-phosphate reductoisomerase (396 aa).

NADPH-binding residues include T10, G11, S12, I13, G36, K37, N38, and N124. K125 is a binding site for 1-deoxy-D-xylulose 5-phosphate. Residue E126 participates in NADPH binding. Residue D150 coordinates Mn(2+). S151, E152, S186, and H209 together coordinate 1-deoxy-D-xylulose 5-phosphate. E152 is a binding site for Mn(2+). G215 is a binding site for NADPH. Positions 222, 227, 228, and 231 each coordinate 1-deoxy-D-xylulose 5-phosphate. E231 contacts Mn(2+).

It belongs to the DXR family. Mg(2+) serves as cofactor. It depends on Mn(2+) as a cofactor.

It catalyses the reaction 2-C-methyl-D-erythritol 4-phosphate + NADP(+) = 1-deoxy-D-xylulose 5-phosphate + NADPH + H(+). The protein operates within isoprenoid biosynthesis; isopentenyl diphosphate biosynthesis via DXP pathway; isopentenyl diphosphate from 1-deoxy-D-xylulose 5-phosphate: step 1/6. Catalyzes the NADPH-dependent rearrangement and reduction of 1-deoxy-D-xylulose-5-phosphate (DXP) to 2-C-methyl-D-erythritol 4-phosphate (MEP). The polypeptide is 1-deoxy-D-xylulose 5-phosphate reductoisomerase (Glaesserella parasuis serovar 5 (strain SH0165) (Haemophilus parasuis)).